Reading from the N-terminus, the 108-residue chain is UPF0060 membrane protein RER_49640 (108 aa).

Transmembrane regions (helical) follow at residues 8–28 (LLFV…WQGI), 33–53 (GWIW…VATM), 62–82 (ILAA…VVMD), and 87–107 (DRFD…IMYA).

Belongs to the UPF0060 family.

It is found in the cell membrane. This is UPF0060 membrane protein RER_49640 from Rhodococcus erythropolis (strain PR4 / NBRC 100887).